The following is a 262-amino-acid chain: Trypsin eta (262 aa).

The N-terminal stretch at 1–22 (MNKVILRILAVLFLLGIYAVSA) is a signal peptide. The propeptide at 23–27 (QSDGR) is activation peptide. Positions 28–259 (IVGGADTSSY…YKDWIAKQRT (232 aa)) constitute a Peptidase S1 domain. An intrachain disulfide couples Cys59 to Cys75. Catalysis depends on charge relay system residues His74 and Asp120. 2 disulfide bridges follow: Cys185/Cys200 and Cys211/Cys235. Ser215 serves as the catalytic Charge relay system.

This sequence belongs to the peptidase S1 family.

Its subcellular location is the secreted. The protein resides in the extracellular space. The catalysed reaction is Preferential cleavage: Arg-|-Xaa, Lys-|-Xaa.. This is Trypsin eta (etaTry) from Drosophila melanogaster (Fruit fly).